The chain runs to 54 residues: Ovomucoid (54 aa).

Positions 4-54 (VDCSDYPKPVCTLDYMPLCGSDNKTYSNKCNFCNAVVDSNGTITLSHFGRC) constitute a Kazal-like domain. Disulfide bonds link cysteine 6–cysteine 36, cysteine 14–cysteine 33, and cysteine 22–cysteine 54. Asparagine 43 carries N-linked (GlcNAc...) asparagine glycosylation.

Its subcellular location is the secreted. The sequence is that of Ovomucoid from Coloeus monedula (Eurasian jackdaw).